An 84-amino-acid polypeptide reads, in one-letter code: Control protein C.SmaI (84 aa).

Residues 19 to 73 (VRSYRNINNLSQEQLAEISGLHRTYIGSVERKERNVTLSTLIILAKALNTSVPKL) enclose the HTH cro/C1-type domain. Residues 30 to 49 (QEQLAEISGLHRTYIGSVER) constitute a DNA-binding region (H-T-H motif).

Functionally, may control expression of its associated restriction-modification system SmaI. The polypeptide is Control protein C.SmaI (Serratia marcescens).